A 1013-amino-acid polypeptide reads, in one-letter code: Poly [ADP-ribose] polymerase 1 (1013 aa).

Ala-2 carries the N-acetylalanine modification. The PARP-type 1 zinc finger occupies 9 to 93 (YRVEYAKSGR…KVKKTAEAGG (85 aa)). Zn(2+)-binding residues include Cys-21 and Cys-24. The residue at position 41 (Ser-41) is a Phosphoserine. His-53 and Cys-56 together coordinate Zn(2+). An N6-acetyllysine mark is found at Lys-97 and Lys-105. A PARP-type 2 zinc finger spans residues 113 to 203 (FAAEYAKSNR…VLKKQLPGVK (91 aa)). Residues Cys-125 and Cys-128 each coordinate Zn(2+). Lys-131 carries the N6-acetyllysine modification. Zn(2+)-binding residues include His-159 and Cys-162. Phosphoserine is present on residues Ser-177, Ser-179, and Ser-185. Residue Lys-192 forms a Glycyl lysine isopeptide (Lys-Gly) (interchain with G-Cter in SUMO2) linkage. The disordered stretch occupies residues 198–233 (QLPGVKSEGKRKGDEVDGADEVAKKKSKKGKDKDSK). Lys-203 is covalently cross-linked (Glycyl lysine isopeptide (Lys-Gly) (interchain with G-Cter in SUMO1); alternate). Residue Lys-203 forms a Glycyl lysine isopeptide (Lys-Gly) (interchain with G-Cter in SUMO2); alternate linkage. 2 consecutive short sequence motifs (nuclear localization signal) follow at residues 207-209 (KRK) and 221-226 (KKKSKK). Positions 225-359 (KKGKDKDSKL…VKKQDRIFPP (135 aa)) constitute a PADR1 zinc-binding domain. Lys-249 is covalently cross-linked (Glycyl lysine isopeptide (Lys-Gly) (interchain with G-Cter in SUMO2)). Phosphoserine is present on residues Ser-274 and Ser-277. Residues 290-332 (GALLPCKECSGQLVFKSDAYYCTGDVTAWTKCMVKTQTPSRKE) form a zinc ribbon region. Residues Cys-295, Cys-298, Cys-311, and Cys-321 each coordinate Zn(2+). Residues 357–383 (FPPETSAPAPPHLPPSVTSAPTAVNSS) are disordered. Residues 372–383 (SVTSAPTAVNSS) are compositionally biased toward polar residues. Positions 373–523 (VTSAPTAVNS…GVNKSEKRMK (151 aa)) are automodification domain. The region spanning 385-476 (PADKPLSNMK…KSLQELLSAH (92 aa)) is the BRCT domain. Asp-387 is subject to PolyADP-ribosyl aspartic acid. PolyADP-ribosyl glutamic acid is present on residues Glu-407, Glu-413, Glu-435, Glu-437, Glu-444, Glu-445, and Glu-456. Residue Lys-467 forms a Glycyl lysine isopeptide (Lys-Gly) (interchain with G-Cter in SUMO2) linkage. A polyADP-ribosyl glutamic acid mark is found at Glu-471 and Glu-484. Lys-486 is covalently cross-linked (Glycyl lysine isopeptide (Lys-Gly) (interchain with G-Cter in SUMO1); alternate). Lys-486 participates in a covalent cross-link: Glycyl lysine isopeptide (Lys-Gly) (interchain with G-Cter in SUMO2); alternate. PolyADP-ribosyl glutamic acid is present on residues Glu-488 and Glu-491. The segment at 495–516 (PKGKSAAPSKKSKGLYKEEGVN) is disordered. 3 positions are modified to ADP-ribosylserine: Ser-499, Ser-503, and Ser-506. A Glycyl lysine isopeptide (Lys-Gly) (interchain with G-Cter in SUMO2) cross-link involves residue Lys-511. Residues Glu-512 and Glu-513 each carry the polyADP-ribosyl glutamic acid modification. The residue at position 518 (Ser-518) is an ADP-ribosylserine. Glu-519 bears the PolyADP-ribosyl glutamic acid mark. Lys-520 is modified (N6-(ADP-ribosyl)lysine). Lys-527 is covalently cross-linked (Glycyl lysine isopeptide (Lys-Gly) (interchain with G-Cter in SUMO2)). Positions 541–637 (SAHVLEKGGK…KNFTKYPKKF (97 aa)) constitute a WGR domain. Thr-593 bears the Phosphothreonine mark. N6-acetyllysine is present on residues Lys-599 and Lys-620. Residues 661 to 778 (KSKLPKAVQE…DIEVAYSLLR (118 aa)) form the PARP alpha-helical domain. Lys-747 is covalently cross-linked (Glycyl lysine isopeptide (Lys-Gly) (interchain with G-Cter in SUMO1); alternate). Lys-747 is covalently cross-linked (Glycyl lysine isopeptide (Lys-Gly) (interchain with G-Cter in SUMO2); alternate). Ser-781 and Ser-785 each carry phosphoserine. The 227-residue stretch at 787–1013 (DPIDVNYEKL…LKFNFKTSLW (227 aa)) folds into the PARP catalytic domain. Residues 861 to 863 (HGS), Gly-870, Arg-877, and Ser-903 each bind NAD(+). Glu-987 functions as the For poly [ADP-ribose] polymerase activity in the catalytic mechanism.

This sequence belongs to the ARTD/PARP family. Homodimer; PARP-type zinc-fingers from separate PARP1 molecules form a dimer module that specifically recognizes DNA strand breaks. Heterodimer; heterodimerizes with PARP2. Interacts (via the PARP catalytic domain) with HPF1. Interacts with NMNAT1. Interacts with nucleosomes; with a preference for nucleosomes containing H2A.X. Interacts with APTX. Component of a base excision repair (BER) complex, containing at least XRCC1, PARP1, PARP2, POLB and LRIG3. Interacts with SRY. The SWAP complex consists of NPM1, NCL, PARP1 and SWAP70. Interacts with TIAM2. Interacts with PARP3; leading to activate PARP1 in absence of DNA. Interacts (when poly-ADP-ribosylated) with CHD1L (via macro domain). Interacts with the DNA polymerase alpha catalytic subunit POLA1; this interaction functions as part of the control of replication fork progression. Interacts with EEF1A1 and TXK. Interacts with RNF4. Interacts with RNF146. Interacts with ZNF423. Interacts with APLF. Interacts with SNAI1 (via zinc fingers); the interaction requires SNAI1 to be poly-ADP-ribosylated and non-phosphorylated (active) by GSK3B. Interacts (when poly-ADP-ribosylated) with PARP9. Interacts with NR4A3; activates PARP1 by improving acetylation of PARP1 and suppressing the interaction between PARP1 and SIRT1. Interacts (via catalytic domain) with PUM3; the interaction inhibits the poly-ADP-ribosylation activity of PARP1 and the degradation of PARP1 by CASP3 following genotoxic stress. Interacts with ZNF365. Interacts with RRP1B. Interacts with TIMELESS; the interaction is direct. Interacts with CGAS; leading to impede the formation of the PARP1-TIMELESS complex. Interacts with KHDC3L, the interaction is increased following the formation of DNA double-strand breaks. Interacts (when auto-poly-ADP-ribosylated) with XRCC1; leading to inhibit PARP1 ADP-ribosyltransferase activity. Interacts with SPINDOC; promoting PARP1 ADP-ribosyltransferase activity. Interacts with BANF1; leading to inhibit PARP1 ADP-ribosyltransferase activity in response to oxidative DNA damage. Interacts (when sumoylated and ubiquitinated) with VCP/p97; leading to its extraction from chromatin. Interacts with YARS1; promoting PARP1 ADP-ribosyltransferase activity. Interacts with PACMP micropeptide; Interacts with PACMP micropeptide; interaction. Interacts (when poly-ADP-ribosylated) with isoform 1 of MACROH2A1; MACROH2A1 specifically binds to poly-ADP-ribose chains and inhibits PARP1 activity, limiting the consumption of nuclear NAD(+). Interacts with CARM1; promoting recruitment to replication forks. Interacts with RECQL. Interacts with ZNF32; the interaction reshapes ZNF432 interacting proteins. Interacts with TPRN; TPRN interacts with a number of DNA damage response proteins, is recruited to sites of DNA damage and may play a role in DNA damage repair. In terms of assembly, interacts (when auto-poly-ADP-ribosylated) with AIFM1. Poly-ADP-ribosylated on serine, glutamate and aspartate residues by autocatalysis. Auto-ADP-ribosylation on serine takes place following interaction with HPF1. Auto poly-ADP-ribosylation on serine residues promotes its dissociation from chromatin. Poly-ADP-ribosylated by PARP2; poly-ADP-ribosylation mediates the recruitment of CHD1L to DNA damage sites. Mono-ADP-ribosylated at Lys-520 by SIRT6 in response to oxidative stress, promoting recruitment to double-strand breaks (DSBs) sites. Post-translationally, S-nitrosylated, leading to inhibit transcription regulation activity. In terms of processing, phosphorylated at Thr-593 by PRKDC in response to DNA damage following virus infection, promoting its translocation to the cytosol. Phosphorylated by TXK. Proteolytically cleaved by caspase-3 (CASP3) and caspase-7 (CASP7) in response to apoptosis to generate the Poly [ADP-ribose] polymerase 1, processed N-terminus and Poly [ADP-ribose] polymerase 1, processed C-terminus forms. Post-translationally, sumoylated with SUMO1 or SUMO2 by PIAS4 following prolonged residence (trapping) to chromatin. Sumoylation promotes ubiquitination by RNF4 and removal from chromatin by VCP/p97. In terms of processing, ubiquitinated by RNF4 following sumoylation by PIAS4 in response to prolonged residence (trapping) to chromatin. Ubiquitination promotes removal from chromatin by VCP/p97.

The protein resides in the chromosome. It is found in the nucleus. It localises to the nucleolus. The protein localises to the cytoplasm. Its subcellular location is the cytosol. The catalysed reaction is NAD(+) + (ADP-D-ribosyl)n-acceptor = nicotinamide + (ADP-D-ribosyl)n+1-acceptor + H(+).. It carries out the reaction L-seryl-[protein] + NAD(+) = O-(ADP-D-ribosyl)-L-seryl-[protein] + nicotinamide + H(+). The enzyme catalyses L-aspartyl-[protein] + NAD(+) = 4-O-(ADP-D-ribosyl)-L-aspartyl-[protein] + nicotinamide. It catalyses the reaction L-glutamyl-[protein] + NAD(+) = 5-O-(ADP-D-ribosyl)-L-glutamyl-[protein] + nicotinamide. The catalysed reaction is L-tyrosyl-[protein] + NAD(+) = O-(ADP-D-ribosyl)-L-tyrosyl-[protein] + nicotinamide + H(+). It carries out the reaction L-histidyl-[protein] + NAD(+) = N(tele)-(ADP-D-ribosyl)-L-histidyl-[protein] + nicotinamide + H(+). With respect to regulation, ADP-ribosyltransferase activity is regulated via an allosteric activation mechanism. In absence of activation signal, PARP1 is autoinhibited by the PARP alpha-helical domain (also named HD region), which prevents effective NAD(+)-binding. Activity is highly stimulated by signals, such as DNA strand breaks. Binding to damaged DNA unfolds the PARP alpha-helical domain, relieving autoinhibition. Poly-ADP-ribosyltransferase activity is tightly regulated and PARP1 is removed from damaged chromatin following initial poly-ADP-ribosylation of chromatin to avoid prolonged residence (trapping) that has cytotoxic consequences. A number of factors (VCP/p97) or post-translational modifications (auto-poly-ADP-ribosylation or ubiquitination) promote PARP1 removal from chromatin. Poly-ADP-ribosyltransferase that mediates poly-ADP-ribosylation of proteins and plays a key role in DNA repair. Mediates glutamate, aspartate, serine, histidine or tyrosine ADP-ribosylation of proteins: the ADP-D-ribosyl group of NAD(+) is transferred to the acceptor carboxyl group of target residues and further ADP-ribosyl groups are transferred to the 2'-position of the terminal adenosine moiety, building up a polymer with an average chain length of 20-30 units. Serine ADP-ribosylation of proteins constitutes the primary form of ADP-ribosylation of proteins in response to DNA damage. Specificity for the different amino acids is conferred by interacting factors, such as HPF1 and NMNAT1. Following interaction with HPF1, catalyzes serine ADP-ribosylation of target proteins; HPF1 confers serine specificity by completing the PARP1 active site. Also catalyzes tyrosine ADP-ribosylation of target proteins following interaction with HPF1. Following interaction with NMNAT1, catalyzes glutamate and aspartate ADP-ribosylation of target proteins; NMNAT1 confers glutamate and aspartate specificity. PARP1 initiates the repair of DNA breaks: recognizes and binds DNA breaks within chromatin and recruits HPF1, licensing serine ADP-ribosylation of target proteins, such as histones (H2BS6ADPr and H3S10ADPr), thereby promoting decompaction of chromatin and the recruitment of repair factors leading to the reparation of DNA strand breaks. HPF1 initiates serine ADP-ribosylation but restricts the polymerase activity of PARP1 in order to limit the length of poly-ADP-ribose chains. In addition to base excision repair (BER) pathway, also involved in double-strand breaks (DSBs) repair: together with TIMELESS, accumulates at DNA damage sites and promotes homologous recombination repair by mediating poly-ADP-ribosylation. Mediates the poly-ADP-ribosylation of a number of proteins, including itself, APLF, CHFR and NFAT5. In addition to proteins, also able to ADP-ribosylate DNA: catalyzes ADP-ribosylation of DNA strand break termini containing terminal phosphates and a 2'-OH group in single- and double-stranded DNA, respectively. Required for PARP9 and DTX3L recruitment to DNA damage sites. PARP1-dependent PARP9-DTX3L-mediated ubiquitination promotes the rapid and specific recruitment of 53BP1/TP53BP1, UIMC1/RAP80, and BRCA1 to DNA damage sites. PARP1-mediated DNA repair in neurons plays a role in sleep: senses DNA damage in neurons and promotes sleep, facilitating efficient DNA repair. In addition to DNA repair, also involved in other processes, such as transcription regulation, programmed cell death, membrane repair, adipogenesis and innate immunity. Acts as a repressor of transcription: binds to nucleosomes and modulates chromatin structure in a manner similar to histone H1, thereby altering RNA polymerase II. Acts both as a positive and negative regulator of transcription elongation, depending on the context. Acts as a positive regulator of transcription elongation by mediating poly-ADP-ribosylation of NELFE, preventing RNA-binding activity of NELFE and relieving transcription pausing. Acts as a negative regulator of transcription elongation in response to DNA damage by catalyzing poly-ADP-ribosylation of CCNT1, disrupting the phase separation activity of CCNT1 and subsequent activation of CDK9. Involved in replication fork progression following interaction with CARM1: mediates poly-ADP-ribosylation at replication forks, slowing fork progression. Poly-ADP-ribose chains generated by PARP1 also play a role in poly-ADP-ribose-dependent cell death, a process named parthanatos. Also acts as a negative regulator of the cGAS-STING pathway. Acts by mediating poly-ADP-ribosylation of CGAS: PARP1 translocates into the cytosol following phosphorylation by PRKDC and catalyzes poly-ADP-ribosylation and inactivation of CGAS. Acts as a negative regulator of adipogenesis: catalyzes poly-ADP-ribosylation of histone H2B on 'Glu-35' (H2BE35ADPr) following interaction with NMNAT1, inhibiting phosphorylation of H2B at 'Ser-36' (H2BS36ph), thereby blocking expression of pro-adipogenetic genes. Involved in the synthesis of ATP in the nucleus, together with NMNAT1, PARG and NUDT5. Nuclear ATP generation is required for extensive chromatin remodeling events that are energy-consuming. In terms of biological role, promotes AIFM1-mediated apoptosis. This form, which translocates into the cytoplasm following cleavage by caspase-3 (CASP3) and caspase-7 (CASP7) in response to apoptosis, is auto-poly-ADP-ribosylated and serves as a poly-ADP-ribose carrier to induce AIFM1-mediated apoptosis. Its function is as follows. This cleavage form irreversibly binds to DNA breaks and interferes with DNA repair, promoting DNA damage-induced apoptosis. This is Poly [ADP-ribose] polymerase 1 (PARP1) from Cricetulus griseus (Chinese hamster).